The sequence spans 449 residues: Agmatine hydroxycinnamoyltransferase 1 (449 aa).

Active-site proton acceptor residues include H153 and D392.

It belongs to the plant acyltransferase family. As to expression, highly expressed in roots. Expressed at low levels in flowers.

Functionally, hydroxycinnamoyl transferase that catalyzes the transfer of an acyl from p-coumaryol-CoA to agmatine, to produce coumaroyl agmatine. Can use feruloyl-CoA, caffeoyl-CoA and sinapoyl-CoA as acyl donors. Seems to be able to transfer the acyl group from p-coumaroyl-CoA and feruloyl-CoA to the acyl acceptors putrescine and spermidine. This chain is Agmatine hydroxycinnamoyltransferase 1, found in Oryza sativa subsp. japonica (Rice).